The following is a 458-amino-acid chain: MSITKEFDTIAAISTPLGEGAIGIVRISGTDALKIASKIYRGKDLSAIQSHTLNYGHIVDPDKNEILDEVMLGVMLAPKTFTREDVIEINTHGGIAVTNEILQLILRHGARMAEPGEFTKRAFLNGRVDLTQAEAVMDLIRAKTDKAMDIAVKQLDGSLKTLINNTRQEILNTLAQVEVNIDYPEYDDVEEMTTTLMREKTQEFQALMENLLRTARRGKILREGLSTAIIGRPNVGKSSLLNNLLREEKAIVTDIEGTTRDVIEEYVNIKGVPLKLVDTAGIRDTDDIVEKIGVERSKKALEEADLVLLVLNSSEPLTLQDRSLLELSKESNRIVLLNKTDLPQKIEVNELPENVIPISVLENENIDKIEERINDIFFDNAGMVEHDATYLSNARHISLIEKAVDSLKAVNEGLELGMPVDLLQVDMTRTWEILGEITGDAAPDELITQLFSQFCLGK.

3 residues coordinate (6S)-5-formyl-5,6,7,8-tetrahydrofolate: arginine 26, glutamate 88, and arginine 127. Residues 224 to 378 (GLSTAIIGRP…IEERINDIFF (155 aa)) form the TrmE-type G domain. Asparagine 234 provides a ligand contact to K(+). GTP is bound by residues 234–239 (NVGKSS), 253–259 (TDIEGTT), and 278–281 (DTAG). Serine 238 lines the Mg(2+) pocket. Threonine 253, isoleucine 255, and threonine 258 together coordinate K(+). Threonine 259 lines the Mg(2+) pocket. (6S)-5-formyl-5,6,7,8-tetrahydrofolate is bound at residue lysine 458.

It belongs to the TRAFAC class TrmE-Era-EngA-EngB-Septin-like GTPase superfamily. TrmE GTPase family. In terms of assembly, homodimer. Heterotetramer of two MnmE and two MnmG subunits. K(+) is required as a cofactor.

The protein localises to the cytoplasm. Exhibits a very high intrinsic GTPase hydrolysis rate. Involved in the addition of a carboxymethylaminomethyl (cmnm) group at the wobble position (U34) of certain tRNAs, forming tRNA-cmnm(5)s(2)U34. This is tRNA modification GTPase MnmE from Streptococcus agalactiae serotype III (strain NEM316).